We begin with the raw amino-acid sequence, 360 residues long: Phospho-N-acetylmuramoyl-pentapeptide-transferase (360 aa).

10 consecutive transmembrane segments (helical) span residues 21–41, 70–90, 97–117, 134–154, 168–188, 199–219, 236–256, 263–283, 288–308, and 338–358; these read YLTL…FIVG, GTPT…TLLW, YVWA…VDDY, YLWQ…TASS, VVLN…VGSS, GLAI…AYAS, AGEL…FLWF, VFMG…VAVL, IVLM…MLQV, and VIVR…ATLK.

It belongs to the glycosyltransferase 4 family. MraY subfamily. Mg(2+) is required as a cofactor.

The protein localises to the cell inner membrane. The catalysed reaction is UDP-N-acetyl-alpha-D-muramoyl-L-alanyl-gamma-D-glutamyl-meso-2,6-diaminopimeloyl-D-alanyl-D-alanine + di-trans,octa-cis-undecaprenyl phosphate = di-trans,octa-cis-undecaprenyl diphospho-N-acetyl-alpha-D-muramoyl-L-alanyl-D-glutamyl-meso-2,6-diaminopimeloyl-D-alanyl-D-alanine + UMP. It participates in cell wall biogenesis; peptidoglycan biosynthesis. Catalyzes the initial step of the lipid cycle reactions in the biosynthesis of the cell wall peptidoglycan: transfers peptidoglycan precursor phospho-MurNAc-pentapeptide from UDP-MurNAc-pentapeptide onto the lipid carrier undecaprenyl phosphate, yielding undecaprenyl-pyrophosphoryl-MurNAc-pentapeptide, known as lipid I. In Methylococcus capsulatus (strain ATCC 33009 / NCIMB 11132 / Bath), this protein is Phospho-N-acetylmuramoyl-pentapeptide-transferase.